We begin with the raw amino-acid sequence, 590 residues long: Monoterepene synthase TPS1, chloropastic (590 aa).

The N-terminal 42 residues, 1–42 (MALNTFLHFPPCSLSSFSCAVPKLPLAIFHKTMARQIRCPRA), are a transit peptide targeting the chloroplast. Residues Arg-304, Asp-341, Asp-345, Arg-483, and Asp-486 each contribute to the (2E)-geranyl diphosphate site. Mg(2+)-binding residues include Asp-341 and Asp-345. The DDXXD motif signature appears at 341–345 (DDMYD). Residues Asp-486, Thr-490, and Glu-494 each coordinate Mg(2+).

The protein belongs to the terpene synthase family. Tpsb subfamily. Monomer. Requires Mg(2+) as cofactor.

It localises to the plastid. Its subcellular location is the chloroplast. It catalyses the reaction (2E)-geranyl diphosphate = beta-thujene + diphosphate. It carries out the reaction (2E)-geranyl diphosphate = sabinene + diphosphate. The catalysed reaction is (2E)-geranyl diphosphate = beta-pinene + diphosphate. The enzyme catalyses (2E)-geranyl diphosphate = alpha-terpinene + diphosphate. It participates in secondary metabolite biosynthesis; terpenoid biosynthesis. Functionally, monoterpene synthase involved in the biosynthesis of volatile organic compounds. Mediates the conversion of (2E)-geranyl diphosphate (GPP) into beta-thujene, sabinene, beta-pinene and alpha-terpinene. Does not use (2E,6E)-farnesyl diphosphate (FPP) as substrate. The polypeptide is Monoterepene synthase TPS1, chloropastic (Cananga odorata (Ylang-ylang tree)).